Consider the following 485-residue polypeptide: Glutamyl-tRNA(Gln) amidotransferase subunit A (485 aa).

Catalysis depends on charge relay system residues Lys-79 and Ser-154. Ser-178 (acyl-ester intermediate) is an active-site residue.

Belongs to the amidase family. GatA subfamily. In terms of assembly, heterotrimer of A, B and C subunits.

It carries out the reaction L-glutamyl-tRNA(Gln) + L-glutamine + ATP + H2O = L-glutaminyl-tRNA(Gln) + L-glutamate + ADP + phosphate + H(+). Allows the formation of correctly charged Gln-tRNA(Gln) through the transamidation of misacylated Glu-tRNA(Gln) in organisms which lack glutaminyl-tRNA synthetase. The reaction takes place in the presence of glutamine and ATP through an activated gamma-phospho-Glu-tRNA(Gln). The chain is Glutamyl-tRNA(Gln) amidotransferase subunit A from Clostridium botulinum (strain Eklund 17B / Type B).